The primary structure comprises 1270 residues: Glycine betaine reductase ATRR (1270 aa).

The tract at residues 14-418 is adenylation (A) domain; that stretch reads FTQQVRASPN…MIKLRGYSVV (405 aa). The 78-residue stretch at 528-605 folds into the Carrier domain; the sequence is KEDPIGIEDI…GHLDTVRAIR (78 aa). Serine 565 carries the O-(pantetheine 4'-phosphoryl)serine modification. The carboxylic acid reductase domain R1 stretch occupies residues 643–937; sequence KTVLLTGVTG…EPLSWDDWVA (295 aa). The interval 1026 to 1256 is aldehyde reductase domain R2; sequence PLSGKVAVVT…IYALRQPEHV (231 aa).

The protein belongs to the NRP synthetase family.

The tetramethylammonium ion, which mimics the head group of glycine betaine, acts as a competitive inhibitor of ATRR A domain, whereas the potency decreased by three orders of magnitude with dimethylammonium. Choline is a mixed inhibitor for both glycine betaine reductase and aldehyde reductase activity but more potent in competition against glycine betaine in the first reduction step. Therefore, choline could act as a feedback inhibitor to regulate ATRR enzymatic activity. The lowered binding affinity of choline to R2 favors the release of choline after glycine betaine aldehyde reduction to avoid direct product inhibition. NRPS-like enzyme with an unusual domain architecture that converts back glycine betaine to choline via a 2-step reduction mechanism, and thereby can be an alternative source of choline. Permits direct reutilization of endogenously stored glycine betaine for on-demand biosynthesis of choline and choline derivatives, including phospholipid phosphatidylcholine (PC) which has an essential role in maintaining membrane integrity and functionality, or choline-O-sulfate, a mean for intracellular sulfate storage. Glycine betaine is activated by the adenylation (A) domain, and transferred to the thiolation (T) domain. Movement of the phosphopantetheine arm to the thioester reductase domain R1 then allows thioester reduction by NADPH of glycine betainoyl thioester to glycine betaine aldehyde, which is in turn reduced to choline by the aldehyde reductase domain R2. The chain is Glycine betaine reductase ATRR from Emericella nidulans (strain FGSC A4 / ATCC 38163 / CBS 112.46 / NRRL 194 / M139) (Aspergillus nidulans).